The sequence spans 79 residues: D-alanyl carrier protein (79 aa).

In terms of domain architecture, Carrier spans 1–77 (MDVKETILNI…KIISGVVELM (77 aa)). Position 35 is an O-(pantetheine 4'-phosphoryl)serine (S35).

Belongs to the DltC family. 4'-phosphopantetheine is transferred from CoA to a specific serine of apo-DCP.

The protein resides in the cytoplasm. It participates in cell wall biogenesis; lipoteichoic acid biosynthesis. Its function is as follows. Carrier protein involved in the D-alanylation of lipoteichoic acid (LTA). The loading of thioester-linked D-alanine onto DltC is catalyzed by D-alanine--D-alanyl carrier protein ligase DltA. The DltC-carried D-alanyl group is further transferred to cell membrane phosphatidylglycerol (PG) by forming an ester bond, probably catalyzed by DltD. D-alanylation of LTA plays an important role in modulating the properties of the cell wall in Gram-positive bacteria, influencing the net charge of the cell wall. This chain is D-alanyl carrier protein, found in Streptococcus suis (strain 98HAH33).